Consider the following 1969-residue polypeptide: Myosin-3 (1969 aa).

One can recognise a Myosin N-terminal SH3-like domain in the interval 33-82 (DSKKNCWIPDPEDGFVAAEIQSTTGEQVTVVTVKGNQITVKKDQCQEMNP). Residues 86 to 791 (DKTEDMANLT…VLAKLEDLRD (706 aa)) enclose the Myosin motor domain. Residue lysine 130 is modified to N6,N6,N6-trimethyllysine. 179–186 (GESGAGKT) serves as a coordination point for ATP. Actin-binding stretches follow at residues 667-689 (LNNL…IPNE) and 770-784 (KVGE…GVLA). The 30-residue stretch at 794–823 (LSRIVTMFQSRIRSYLAKAEVRRRYEQQTG) folds into the IQ domain. Residues 857–1969 (KEQEAMGELA…IRSSSNARFL (1113 aa)) are a coiled coil. 4 disordered regions span residues 942–966 (MQER…TKKH), 1006–1029 (NKEK…EEDK), 1131–1213 (LEEE…GDSV), and 1234–1255 (KSKL…VRSR). Composition is skewed to basic and acidic residues over residues 1137 to 1164 (AERN…ERLE) and 1176 to 1197 (ANKK…DSLN).

The protein belongs to the TRAFAC class myosin-kinesin ATPase superfamily. Myosin family. In terms of assembly, muscle myosin is a hexameric protein that consists of 2 heavy chain subunits (MHC), 2 alkali light chain subunits (MLC) and 2 regulatory light chain subunits (MLC-2). Expressed in body wall muscles, neighboring vulval muscle cells and the contractile sheath covering the hermaphrodite gonad (myoepithelial sheath cells).

The protein resides in the cytoplasm. It localises to the myofibril. It is found in the sarcomere. Its subcellular location is the a band. In terms of biological role, essential for muscle contraction. Involved in ovulation likely by regulating the contraction of gonadal myoepithelial sheath cells. This Caenorhabditis elegans protein is Myosin-3 (myo-3).